Here is a 207-residue protein sequence, read N- to C-terminus: Dephospho-CoA kinase (207 aa).

Positions 10–207 (ILGLTGGIGS…FYLTLRGGQP (198 aa)) constitute a DPCK domain. Residue 18-23 (GSGKSA) participates in ATP binding.

This sequence belongs to the CoaE family.

It localises to the cytoplasm. The catalysed reaction is 3'-dephospho-CoA + ATP = ADP + CoA + H(+). It participates in cofactor biosynthesis; coenzyme A biosynthesis; CoA from (R)-pantothenate: step 5/5. In terms of biological role, catalyzes the phosphorylation of the 3'-hydroxyl group of dephosphocoenzyme A to form coenzyme A. The chain is Dephospho-CoA kinase from Pseudomonas putida (Arthrobacter siderocapsulatus).